The sequence spans 391 residues: Ferrochelatase (391 aa).

Fe cation contacts are provided by His196 and Glu281.

This sequence belongs to the ferrochelatase family.

The protein localises to the cytoplasm. The enzyme catalyses heme b + 2 H(+) = protoporphyrin IX + Fe(2+). Its pathway is porphyrin-containing compound metabolism; protoheme biosynthesis; protoheme from protoporphyrin-IX: step 1/1. In terms of biological role, catalyzes the ferrous insertion into protoporphyrin IX. This Prochlorococcus marinus (strain MIT 9211) protein is Ferrochelatase.